A 1762-amino-acid chain; its full sequence is ADAMTS-like protein 1 (1762 aa).

The N-terminal stretch at 1–28 (MECCRRATPGTLLLFLAFLLLSSRTARS) is a signal peptide. Positions 33–82 (DGLWDAWGPWSECSRTCGGGASYSLRRCLSSKSCEGRNIRYRTCSNVDCP) constitute a TSP type-1 1 domain. Residues Trp-39 and Trp-42 are each glycosylated (C-linked (Man) tryptophan). 3 cysteine pairs are disulfide-bonded: Cys-45-Cys-76, Cys-49-Cys-81, and Cys-60-Cys-66. O-linked (Fuc...) threonine glycosylation occurs at Thr-48. Residue Asn-251 is glycosylated (N-linked (GlcNAc...) asparagine). O-linked (Fuc...) threonine glycosylation occurs at Thr-312. TSP type-1 domains lie at 376-424 (PLPR…MYTP), 436-493 (DCPK…TPCY), 522-584 (EEPS…GPCS), 607-665 (ELYD…NLDP), 666-729 (CPAR…FNCP), and 788-850 (CPSE…ATCA). O-linked (Fuc...) serine glycosylation is present at Ser-391. A glycan (O-linked (Fuc...) threonine) is linked at Thr-451. 3 disulfide bridges follow: Cys-534/Cys-578, Cys-538/Cys-583, and Cys-549/Cys-567. 7 cysteine pairs are disulfide-bonded: Cys-678/Cys-723, Cys-682/Cys-728, Cys-693/Cys-712, Cys-800/Cys-844, Cys-804/Cys-849, Cys-815/Cys-832, and Cys-899/Cys-947. The region spanning 861–963 (PHIAAARKVY…EHFVIKLIGG (103 aa)) is the Ig-like C2-type 1 domain. The interval 1120–1164 (LKPSERRTSPVTLSPHKHVSGFSSSLRTSSTGDAGGGSRRPHRKP) is disordered. Low complexity predominate over residues 1139–1151 (SGFSSSLRTSSTG). Ig-like C2-type domains follow at residues 1164-1266 (PTIL…IAVT), 1286-1369 (PAVT…TQLL), and 1395-1485 (PSVL…ASLV). Intrachain disulfides connect Cys-1202–Cys-1250, Cys-1308–Cys-1353, and Cys-1418–Cys-1469. TSP type-1 domains lie at 1545–1608 (CPSR…QLCV) and 1666–1726 (CSVH…TPCE). One can recognise a PLAC domain in the interval 1726–1762 (ENMECRDTTRYCEKVKQLKLCQLSQFKSRCCGTCGKA).

Monomer. C-, N- and O-glycosylated. O-fucosylated by POFUT2 on a serine or a threonine residue found within the consensus sequence C1-X(2)-(S/T)-C2-G of the TSP type-1 repeat domains where C1 and C2 are the first and second cysteine residue of the repeat, respectively. Fucosylated repeats can then be further glycosylated by the addition of a beta-1,3-glucose residue by the glucosyltransferase, B3GALTL. Fucosylation mediates the efficient secretion of ADAMTSL1. Can also be C-glycosylated with one or two mannose molecules on tryptophan residues within the consensus sequence W-X-X-W of the TPRs, and N-glycosylated. These other glycosylations can also facilitate secretion. Post-translationally, disulfide bonds are present. As to expression, expressed primarily in adult skeletal muscle.

The protein localises to the secreted. It localises to the extracellular space. Its subcellular location is the extracellular matrix. The sequence is that of ADAMTS-like protein 1 (ADAMTSL1) from Homo sapiens (Human).